Reading from the N-terminus, the 423-residue chain is MTISIRGARVIDPASDLDQVGDLHIEAGKIVAIGAAPAGFSAQKTLDGAGLVAAPGLVDLSVALREPGYGRKGNVESETRAAAAGGTTSLCCPPYTRPVLDTPAVAELILDRAREAGNAKVYPIGALTRGFGGEQLSELVALRDTGCVAFTNGLHGFASNRILRRALEYAATFDLTVIFTSQDTDLAEGGLAHEGPTASFLGLAGIPETAETVALARNLLLVEQSGVRAHFSQLTSARGIELVAQAQARGLPVTCDVALYQLILTDEALVGFSSLYHVQPPLRTRADREALREAVKNGVVQAIASHHQPHEADAKNAPFAATEPGISGAELLLPLAMTLVQDGLLDLPTLLARLSHGPAQALRLPAGRLAVGQAADLVLFDPQGSTLAGESWYSKGQNSPFVGHCLPGRVRYTLVDGHLTHEG.

It belongs to the metallo-dependent hydrolases superfamily. DHOase family. PyrC' subfamily. In terms of assembly, heterododecamer of 6 active PyrB subunits and 6 non-catalytic PyrC' subunits.

In terms of biological role, non-functional DHOase. The sequence is that of Dihydroorotase-like protein (pyrC') from Pseudomonas aeruginosa (strain ATCC 15692 / DSM 22644 / CIP 104116 / JCM 14847 / LMG 12228 / 1C / PRS 101 / PAO1).